The primary structure comprises 721 residues: Polyribonucleotide nucleotidyltransferase (721 aa).

Asp490 and Asp496 together coordinate Mg(2+). Residues 557–618 (PRILTLKINP…EAVRQKIEGL (62 aa)) enclose the KH domain. One can recognise an S1 motif domain in the interval 625-693 (GEEYEGTVVK…DRGKIDLIRP (69 aa)). A disordered region spans residues 696 to 721 (EGKIAPREPRAARAGGDRGGRPPRRE).

Belongs to the polyribonucleotide nucleotidyltransferase family. The cofactor is Mg(2+).

The protein resides in the cytoplasm. The catalysed reaction is RNA(n+1) + phosphate = RNA(n) + a ribonucleoside 5'-diphosphate. Functionally, involved in mRNA degradation. Catalyzes the phosphorolysis of single-stranded polyribonucleotides processively in the 3'- to 5'-direction. This Deinococcus geothermalis (strain DSM 11300 / CIP 105573 / AG-3a) protein is Polyribonucleotide nucleotidyltransferase.